Reading from the N-terminus, the 125-residue chain is MNTPEHMTAVVQRYVAALNAGDLDGIVALFADDATVEDPVGSEPRSGTAAIREFYANSLKLPLAVELTQEVRAVANEAAFAFTVSFEYQGRKTVVAPIDHFRFNGAGKVVSMRALFGEKNIHAGA.

The Proton donor role is filled by Tyr14. Asp38 serves as the catalytic Proton acceptor. Residue Asp99 participates in substrate binding.

Homodimer.

It carries out the reaction a 3-oxo-Delta(5)-steroid = a 3-oxo-Delta(4)-steroid. The sequence is that of Steroid Delta-isomerase (ksi) from Comamonas testosteroni (Pseudomonas testosteroni).